A 545-amino-acid chain; its full sequence is Glucose-6-phosphate isomerase (545 aa).

The Proton donor role is filled by E351. Active-site residues include H382 and K510.

It belongs to the GPI family.

Its subcellular location is the cytoplasm. The enzyme catalyses alpha-D-glucose 6-phosphate = beta-D-fructose 6-phosphate. It participates in carbohydrate biosynthesis; gluconeogenesis. The protein operates within carbohydrate degradation; glycolysis; D-glyceraldehyde 3-phosphate and glycerone phosphate from D-glucose: step 2/4. In terms of biological role, catalyzes the reversible isomerization of glucose-6-phosphate to fructose-6-phosphate. The chain is Glucose-6-phosphate isomerase from Shewanella sp. (strain MR-7).